A 326-amino-acid polypeptide reads, in one-letter code: Protoheme IX farnesyltransferase (326 aa).

8 consecutive transmembrane segments (helical) span residues 35 to 55 (LIPL…GWPL), 60 to 80 (LICT…LNCL), 106 to 126 (TAFI…VSGV), 129 to 149 (LAAG…TALL), 157 to 177 (IVVG…AATG), 185 to 205 (WLFA…ALLL), 238 to 258 (VLLS…YGLM), and 289 to 309 (WSIL…SALA).

The protein belongs to the UbiA prenyltransferase family. Protoheme IX farnesyltransferase subfamily.

It localises to the cell inner membrane. It catalyses the reaction heme b + (2E,6E)-farnesyl diphosphate + H2O = Fe(II)-heme o + diphosphate. It functions in the pathway porphyrin-containing compound metabolism; heme O biosynthesis; heme O from protoheme: step 1/1. Functionally, converts heme B (protoheme IX) to heme O by substitution of the vinyl group on carbon 2 of heme B porphyrin ring with a hydroxyethyl farnesyl side group. This chain is Protoheme IX farnesyltransferase, found in Synechococcus sp. (strain CC9902).